A 702-amino-acid chain; its full sequence is Phosphoglycerol transferase I (702 aa).

3 helical membrane-spanning segments follow: residues 2 to 22, 71 to 91, and 103 to 123; these read HWMLLVSLLLLLWLLVASPRL, FSGYIAVFVGMLLLSLSPLLL, and GGAVFAGFVGMLLVGIAASPL.

Belongs to the OpgB family.

The protein localises to the cell inner membrane. The catalysed reaction is a phosphatidylglycerol + a membrane-derived-oligosaccharide D-glucose = a 1,2-diacyl-sn-glycerol + a membrane-derived-oligosaccharide 6-(glycerophospho)-D-glucose.. The protein operates within glycan metabolism; osmoregulated periplasmic glucan (OPG) biosynthesis. In terms of biological role, transfers a phosphoglycerol residue from phosphatidylglycerol to the membrane-bound nascent glucan backbones. The sequence is that of Phosphoglycerol transferase I from Xanthomonas euvesicatoria pv. vesicatoria (strain 85-10) (Xanthomonas campestris pv. vesicatoria).